We begin with the raw amino-acid sequence, 125 residues long: MINSPRVCVQVQSMYIETQSQPESDRYVFAYTITLRNLGRHPVQLIGRYWLITNANGQETEVQGEGVVGEKPRILPGGEFQYTSGAVLETPLGTMQGHYDMVDDQGQGFHVAIPVFRLAIPSLIN.

In terms of domain architecture, ApaG spans 1–125; the sequence is MINSPRVCVQ…FRLAIPSLIN (125 aa).

The polypeptide is Protein ApaG (Sodalis glossinidius (strain morsitans)).